The sequence spans 491 residues: UDP-N-acetylmuramate--L-alanine ligase (491 aa).

Residue 126 to 132 (GTHGKTT) coordinates ATP.

The protein belongs to the MurCDEF family.

Its subcellular location is the cytoplasm. The catalysed reaction is UDP-N-acetyl-alpha-D-muramate + L-alanine + ATP = UDP-N-acetyl-alpha-D-muramoyl-L-alanine + ADP + phosphate + H(+). The protein operates within cell wall biogenesis; peptidoglycan biosynthesis. In terms of biological role, cell wall formation. The protein is UDP-N-acetylmuramate--L-alanine ligase of Salmonella typhimurium (strain LT2 / SGSC1412 / ATCC 700720).